Here is a 428-residue protein sequence, read N- to C-terminus: Zinc metalloproteinase nas-27 (428 aa).

The signal sequence occupies residues 1–17; that stretch reads MQILPIFFPLLITSLHA. Residues 18–57 constitute a propeptide that is removed on maturation; that stretch reads IPRGRRAVRNRNEGDINSLVGVGQYLYQGDIAVVKSRARR. A Peptidase M12A domain is found at 58 to 255; sequence AVIRQKHKKW…SRMNVLYNCH (198 aa). Disulfide bonds link Cys99–Cys254, Cys120–Cys141, Cys258–Cys276, Cys281–Cys290, Cys306–Cys339, and Cys366–Cys386. Residue His150 coordinates Zn(2+). The active site involves Glu151. Residues His154 and His160 each contribute to the Zn(2+) site. The N-linked (GlcNAc...) asparagine glycan is linked to Asn181. In terms of domain architecture, EGF-like spans 250 to 291; the sequence is VLYNCHERCANTLNRCQQGGYPAPSDCSQCVCPDGFGGNFCE. Positions 306–428 constitute a CUB domain; sequence CGGVLWASET…LDFNIEYRAV (123 aa). N-linked (GlcNAc...) asparagine glycosylation occurs at Asn377.

The cofactor is Zn(2+).

It is found in the secreted. Its function is as follows. Metalloprotease. The protein is Zinc metalloproteinase nas-27 (nas-27) of Caenorhabditis elegans.